The sequence spans 98 residues: Defensin (98 aa).

A signal peptide spans 1–19 (MRTFLVTFVLVVVVGVISA). Residues 20–58 (YPSNPVEVEAEDFDAQDPDLQTFQDTFYEVPQVHSRQKR) constitute a propeptide that is removed on maturation. Intrachain disulfides connect C61-C88, C74-C94, and C78-C96.

As to expression, is synthesized by the fat body and eventually secreted into the hemolymph.

The protein localises to the secreted. In terms of biological role, has antiparasitic activity against promastigote forms of L.major, and antibacterial activity against Gram-positive bacterium S.aureus. Has antifungal activity against the yeasts C.albicans and S.cerevisiae, but not C.glabrata. Has antifungal activity against filamentous fungi A.fumigatus, F.culmorum, F.oxysporum, N.crassa, T.viride and T.mentagrophytes, but not B.bassiana. The chain is Defensin from Phlebotomus duboscqi (Sandfly).